Reading from the N-terminus, the 990-residue chain is Importin beta-like protein kap111 (990 aa).

It belongs to the importin beta family.

It localises to the nucleus. Functions as a component of the nuclear pore complex (NPC). NPC components, collectively referred to as nucleoporins (NUPs), can play the role of both NPC structural components and of docking or interaction partners for transiently associated nuclear transport factors. Active directional transport is assured by both, a Phe-Gly (FG) repeat affinity gradient for these transport factors across the NPC and a transport cofactor concentration gradient across the nuclear envelope. The chain is Importin beta-like protein kap111 (kap111) from Schizosaccharomyces pombe (strain 972 / ATCC 24843) (Fission yeast).